The chain runs to 556 residues: 2-succinyl-5-enolpyruvyl-6-hydroxy-3-cyclohexene-1-carboxylate synthase (556 aa).

It belongs to the TPP enzyme family. MenD subfamily. In terms of assembly, homodimer. It depends on Mg(2+) as a cofactor. Requires Mn(2+) as cofactor. Thiamine diphosphate is required as a cofactor.

The catalysed reaction is isochorismate + 2-oxoglutarate + H(+) = 5-enolpyruvoyl-6-hydroxy-2-succinyl-cyclohex-3-ene-1-carboxylate + CO2. It functions in the pathway quinol/quinone metabolism; 1,4-dihydroxy-2-naphthoate biosynthesis; 1,4-dihydroxy-2-naphthoate from chorismate: step 2/7. It participates in quinol/quinone metabolism; menaquinone biosynthesis. In terms of biological role, catalyzes the thiamine diphosphate-dependent decarboxylation of 2-oxoglutarate and the subsequent addition of the resulting succinic semialdehyde-thiamine pyrophosphate anion to isochorismate to yield 2-succinyl-5-enolpyruvyl-6-hydroxy-3-cyclohexene-1-carboxylate (SEPHCHC). The sequence is that of 2-succinyl-5-enolpyruvyl-6-hydroxy-3-cyclohexene-1-carboxylate synthase from Shigella sonnei (strain Ss046).